Here is a 242-residue protein sequence, read N- to C-terminus: uncharacterized protein (242 aa).

S-adenosyl-L-methionine is bound by residues Gly198, Ile218, and Leu227.

This sequence belongs to the class IV-like SAM-binding methyltransferase superfamily. RNA methyltransferase TrmH family.

This is an uncharacterized protein from Mycoplasma genitalium (strain ATCC 33530 / DSM 19775 / NCTC 10195 / G37) (Mycoplasmoides genitalium).